The sequence spans 702 residues: Methionine--tRNA ligase (702 aa).

The 'HIGH' region signature appears at 14–24 (PYANGPVHLGH). Positions 146, 149, 159, and 162 each coordinate Zn(2+). The short motif at 344–348 (KFSKS) is the 'KMSKS' region element. Residue K347 coordinates ATP. One can recognise a tRNA-binding domain in the interval 601-702 (DFLKVDLRVA…GDEINGQQIQ (102 aa)).

The protein belongs to the class-I aminoacyl-tRNA synthetase family. MetG type 1 subfamily. Homodimer. The cofactor is Zn(2+).

It localises to the cytoplasm. The enzyme catalyses tRNA(Met) + L-methionine + ATP = L-methionyl-tRNA(Met) + AMP + diphosphate. Functionally, is required not only for elongation of protein synthesis but also for the initiation of all mRNA translation through initiator tRNA(fMet) aminoacylation. In Chlorobium limicola (strain DSM 245 / NBRC 103803 / 6330), this protein is Methionine--tRNA ligase.